We begin with the raw amino-acid sequence, 35 residues long: Augerpeptide hheTx4 (35 aa).

Post-translationally, contains 4 disulfide bonds. As to expression, expressed by the venom duct.

It is found in the secreted. The protein is Augerpeptide hheTx4 of Hastula hectica (Sea snail).